The primary structure comprises 318 residues: Tyrosine recombinase XerD (318 aa).

The Core-binding (CB) domain maps to 5–90 (PSDAKLTGLF…AMRHLYRFLL (86 aa)). Positions 111–310 (GLPKVLSIAD…VEERLKSLVR (200 aa)) constitute a Tyr recombinase domain. Residues Arg-161, Lys-185, His-262, Arg-265, and His-288 contribute to the active site. The active-site O-(3'-phospho-DNA)-tyrosine intermediate is Tyr-297.

This sequence belongs to the 'phage' integrase family. XerD subfamily. In terms of assembly, forms a cyclic heterotetrameric complex composed of two molecules of XerC and two molecules of XerD.

It is found in the cytoplasm. Its function is as follows. Site-specific tyrosine recombinase, which acts by catalyzing the cutting and rejoining of the recombining DNA molecules. The XerC-XerD complex is essential to convert dimers of the bacterial chromosome into monomers to permit their segregation at cell division. It also contributes to the segregational stability of plasmids. The sequence is that of Tyrosine recombinase XerD from Bradyrhizobium diazoefficiens (strain JCM 10833 / BCRC 13528 / IAM 13628 / NBRC 14792 / USDA 110).